A 105-amino-acid polypeptide reads, in one-letter code: Thioredoxin (105 aa).

In terms of domain architecture, Thioredoxin spans 2–105; it reads VKQIESKSAF…KLEATINELL (104 aa). Residue Lys-3 is modified to N6-acetyllysine. An N6-succinyllysine modification is found at Lys-8. Catalysis depends on nucleophile residues Cys-32 and Cys-35. Cys-32 and Cys-35 are disulfide-bonded. Residue Lys-39 is modified to N6-acetyllysine. S-nitrosocysteine occurs at positions 62 and 69. Cys-73 carries the post-translational modification S-nitrosocysteine; alternate. Lys-94 bears the N6-acetyllysine; alternate mark. At Lys-94 the chain carries N6-succinyllysine; alternate.

This sequence belongs to the thioredoxin family. As to quaternary structure, homodimer; disulfide-linked. Interacts with TXNIP through the redox-active site. Interacts with MAP3K5 and CASP3. Interacts with APEX1; the interaction stimulates the FOS/JUN AP-1 DNA-binding activity in a redox-dependent manner. Post-translationally, in the fully reduced protein, both Cys-69 and Cys-73 are nitrosylated in response to nitric oxide (NO). When two disulfide bonds are present in the protein, only Cys-73 is nitrosylated. Cys-73 can serve as donor for nitrosylation of target proteins.

It localises to the nucleus. It is found in the cytoplasm. Its subcellular location is the secreted. Functionally, participates in various redox reactions through the reversible oxidation of its active center dithiol to a disulfide and catalyzes dithiol-disulfide exchange reactions. Plays a role in the reversible S-nitrosylation of cysteine residues in target proteins, and thereby contributes to the response to intracellular nitric oxide. Nitrosylates the active site Cys of CASP3 in response to nitric oxide (NO), and thereby inhibits caspase-3 activity. Induces the FOS/JUN AP-1 DNA binding activity in ionizing radiation (IR) cells through its oxidation/reduction status and stimulates AP-1 transcriptional activity. The polypeptide is Thioredoxin (TXN) (Oryctolagus cuniculus (Rabbit)).